An 86-amino-acid chain; its full sequence is Anti-adapter protein IraP (86 aa).

A coiled-coil region spans residues 1–36 (MKNLIAELLFKLAQKEEESKELCAQVEALEIIVTAM).

This sequence belongs to the IraP family. As to quaternary structure, interacts with RssB.

Its subcellular location is the cytoplasm. Inhibits RpoS proteolysis by regulating RssB activity, thereby increasing the stability of the sigma stress factor RpoS especially during phosphate starvation, but also in stationary phase and during nitrogen starvation. Its effect on RpoS stability is due to its interaction with RssB, which probably blocks the interaction of RssB with RpoS, and the consequent delivery of the RssB-RpoS complex to the ClpXP protein degradation pathway. The polypeptide is Anti-adapter protein IraP (Escherichia coli O7:K1 (strain IAI39 / ExPEC)).